The sequence spans 431 residues: 3-phosphoshikimate 1-carboxyvinyltransferase (431 aa).

Positions 20, 21, and 25 each coordinate 3-phosphoshikimate. A phosphoenolpyruvate-binding site is contributed by Lys-20. 2 residues coordinate phosphoenolpyruvate: Gly-91 and Arg-119. Ser-164, Gln-166, Asp-317, and Lys-344 together coordinate 3-phosphoshikimate. Gln-166 lines the phosphoenolpyruvate pocket. Asp-317 functions as the Proton acceptor in the catalytic mechanism. Arg-348 and Arg-390 together coordinate phosphoenolpyruvate.

This sequence belongs to the EPSP synthase family. In terms of assembly, monomer.

The protein localises to the cytoplasm. The catalysed reaction is 3-phosphoshikimate + phosphoenolpyruvate = 5-O-(1-carboxyvinyl)-3-phosphoshikimate + phosphate. It participates in metabolic intermediate biosynthesis; chorismate biosynthesis; chorismate from D-erythrose 4-phosphate and phosphoenolpyruvate: step 6/7. Functionally, catalyzes the transfer of the enolpyruvyl moiety of phosphoenolpyruvate (PEP) to the 5-hydroxyl of shikimate-3-phosphate (S3P) to produce enolpyruvyl shikimate-3-phosphate and inorganic phosphate. The chain is 3-phosphoshikimate 1-carboxyvinyltransferase from Aquifex aeolicus (strain VF5).